Reading from the N-terminus, the 671-residue chain is Putative protein kinase C delta type homolog (671 aa).

Positions 1-136 are disordered; that stretch reads MMFTRAQVRK…ITNRRGAIKH (136 aa). Low complexity predominate over residues 14 to 27; that stretch reads SNSSSQRPRSSGGS. A compositionally biased stretch (basic and acidic residues) spans 57-101; it reads ARRDQYRDRDHYGKHSFELPRQHSKEEAYHRDRESSAGGVDRGER. The span at 102-116 shows a compositional bias: gly residues; it reads SGIGGNGGGVTGGGV. Phorbol-ester/DAG-type zinc fingers lie at residues 144-194 and 216-266; these read GHRF…LGKC and PHRF…ANLC. Residues 343 to 601 form the Protein kinase domain; it reads FHFLAVLGKG…AGDIADHIFF (259 aa). Residues 349–357 and K372 contribute to the ATP site; that span reads LGKGSFGKV. Catalysis depends on D467, which acts as the Proton acceptor. An AGC-kinase C-terminal domain is found at 602–671; the sequence is RPIDWGLLEK…TYTNPHITLD (70 aa).

Belongs to the protein kinase superfamily. AGC Ser/Thr protein kinase family. PKC subfamily.

The catalysed reaction is L-seryl-[protein] + ATP = O-phospho-L-seryl-[protein] + ADP + H(+). The enzyme catalyses L-threonyl-[protein] + ATP = O-phospho-L-threonyl-[protein] + ADP + H(+). The sequence is that of Putative protein kinase C delta type homolog from Drosophila melanogaster (Fruit fly).